The chain runs to 161 residues: Cyclic pyranopterin monophosphate synthase (161 aa).

Residues 78–80 (LCH) and 116–117 (ME) contribute to the substrate site. The active site involves Asp131.

It belongs to the MoaC family. Homohexamer; trimer of dimers.

The catalysed reaction is (8S)-3',8-cyclo-7,8-dihydroguanosine 5'-triphosphate = cyclic pyranopterin phosphate + diphosphate. Its pathway is cofactor biosynthesis; molybdopterin biosynthesis. Functionally, catalyzes the conversion of (8S)-3',8-cyclo-7,8-dihydroguanosine 5'-triphosphate to cyclic pyranopterin monophosphate (cPMP). The protein is Cyclic pyranopterin monophosphate synthase of Bordetella parapertussis (strain 12822 / ATCC BAA-587 / NCTC 13253).